Here is a 486-residue protein sequence, read N- to C-terminus: Ribosomal RNA small subunit methyltransferase F (486 aa).

S-adenosyl-L-methionine is bound by residues 124-130 (ASAPGSK), Glu-148, Asp-175, and Asp-193. The Nucleophile role is filled by Cys-246.

Belongs to the class I-like SAM-binding methyltransferase superfamily. RsmB/NOP family.

It is found in the cytoplasm. It catalyses the reaction cytidine(1407) in 16S rRNA + S-adenosyl-L-methionine = 5-methylcytidine(1407) in 16S rRNA + S-adenosyl-L-homocysteine + H(+). Specifically methylates the cytosine at position 1407 (m5C1407) of 16S rRNA. In Shewanella baltica (strain OS155 / ATCC BAA-1091), this protein is Ribosomal RNA small subunit methyltransferase F.